The sequence spans 487 residues: uncharacterized protein (487 aa).

Disordered regions lie at residues 35–153 (VSRK…SGDQ), 237–345 (NTTK…AKAL), and 358–395 (QKRK…SSAA). Acidic residues predominate over residues 54–96 (FDQEDILDTVPEQTDENEDEAGDDELESEKEELDYDEEEDDED). Residues 97-132 (RRERTSRYTSEKKGSRKDSVEGDENKKENGQDETKR) are compositionally biased toward basic and acidic residues. Over residues 241–253 (SKSRGRDTRKRRS) the composition is skewed to basic residues. The span at 254–264 (SSYSSTSSSSD) shows a compositional bias: low complexity. Basic and acidic residues-rich tracts occupy residues 273–338 (SRSD…KHSA) and 358–383 (QKRK…KKEV). The segment covering 385 to 395 (TTVSTNTSSAA) has biased composition (low complexity).

This is an uncharacterized protein from Caenorhabditis elegans.